The sequence spans 119 residues: Large ribosomal subunit protein uL22 (119 aa).

This sequence belongs to the universal ribosomal protein uL22 family. Part of the 50S ribosomal subunit.

In terms of biological role, this protein binds specifically to 23S rRNA; its binding is stimulated by other ribosomal proteins, e.g. L4, L17, and L20. It is important during the early stages of 50S assembly. It makes multiple contacts with different domains of the 23S rRNA in the assembled 50S subunit and ribosome. Functionally, the globular domain of the protein is located near the polypeptide exit tunnel on the outside of the subunit, while an extended beta-hairpin is found that lines the wall of the exit tunnel in the center of the 70S ribosome. This is Large ribosomal subunit protein uL22 from Rickettsia bellii (strain OSU 85-389).